A 288-amino-acid chain; its full sequence is Bifunctional protein FolD (288 aa).

Residues 166–168 (GAS) and Ile-232 contribute to the NADP(+) site.

It belongs to the tetrahydrofolate dehydrogenase/cyclohydrolase family. In terms of assembly, homodimer.

It carries out the reaction (6R)-5,10-methylene-5,6,7,8-tetrahydrofolate + NADP(+) = (6R)-5,10-methenyltetrahydrofolate + NADPH. It catalyses the reaction (6R)-5,10-methenyltetrahydrofolate + H2O = (6R)-10-formyltetrahydrofolate + H(+). Its pathway is one-carbon metabolism; tetrahydrofolate interconversion. Its function is as follows. Catalyzes the oxidation of 5,10-methylenetetrahydrofolate to 5,10-methenyltetrahydrofolate and then the hydrolysis of 5,10-methenyltetrahydrofolate to 10-formyltetrahydrofolate. The sequence is that of Bifunctional protein FolD from Escherichia fergusonii (strain ATCC 35469 / DSM 13698 / CCUG 18766 / IAM 14443 / JCM 21226 / LMG 7866 / NBRC 102419 / NCTC 12128 / CDC 0568-73).